Consider the following 473-residue polypeptide: Ribulose bisphosphate carboxylase large chain 2 (473 aa).

The substrate site is built by asparagine 116 and threonine 166. The Proton acceptor role is filled by lysine 168. Lysine 170 serves as a coordination point for substrate. Lysine 194, aspartate 196, and glutamate 197 together coordinate Mg(2+). N6-carboxylysine is present on lysine 194. Residue histidine 287 is the Proton acceptor of the active site. Residues arginine 288, histidine 320, and serine 372 each contribute to the substrate site.

Belongs to the RuBisCO large chain family. Type I subfamily. Heterohexadecamer of 8 large chains and 8 small chains. Mg(2+) serves as cofactor.

The enzyme catalyses 2 (2R)-3-phosphoglycerate + 2 H(+) = D-ribulose 1,5-bisphosphate + CO2 + H2O. It carries out the reaction D-ribulose 1,5-bisphosphate + O2 = 2-phosphoglycolate + (2R)-3-phosphoglycerate + 2 H(+). Its function is as follows. RuBisCO catalyzes two reactions: the carboxylation of D-ribulose 1,5-bisphosphate, the primary event in carbon dioxide fixation, as well as the oxidative fragmentation of the pentose substrate. Both reactions occur simultaneously and in competition at the same active site. This chain is Ribulose bisphosphate carboxylase large chain 2, found in Cereibacter sphaeroides (strain ATCC 17025 / ATH 2.4.3) (Rhodobacter sphaeroides).